The chain runs to 536 residues: Velvet complex subunit B (536 aa).

Residues 1-26 (MIQRTTDPAAGSSTSGPPTNSLSWGS) are compositionally biased toward polar residues. Disordered regions lie at residues 1-27 (MIQR…WGSR), 106-143 (PNAA…AIPF), 157-409 (SAPA…RTLV), and 508-536 (KLPL…EESD). The region spanning 25–512 (GSRHNGKLYT…NQQNMKLPLR (488 aa)) is the Velvet domain. Residues 114 to 143 (PPMPAKPRRPTNPPPPSNTHGSPPAPAIPF) show a composition bias toward pro residues. Composition is skewed to low complexity over residues 158 to 170 (APAS…SASA) and 190 to 265 (PYGP…YPPY). Residues 280-305 (TSNFDHSQPVTSSVDQETNSPVVTTT) show a composition bias toward polar residues. A compositionally biased stretch (basic and acidic residues) spans 306 to 315 (ARDDDQREGE). A compositionally biased stretch (low complexity) spans 328–342 (PSNSGAPSTSPTAST). Residues 356 to 399 (EEREGPDGGPDLREPIEPGSTKAREEEDARTGTEKGDPKDKSDA) show a composition bias toward basic and acidic residues. A compositionally biased stretch (polar residues) spans 400-409 (QRATYTRTLV). Over residues 511–525 (LRNRHGSGSKRRRRG) the composition is skewed to basic residues.

This sequence belongs to the velvet family. VelB subfamily. In terms of assembly, component of the heterotrimeric velvet complex composed of laeA, veA and velB; VeA acting as a bridging protein between laeA and velB. Forms a heterodimeric complex with vosA; the formation of the velB-vosA complex is light-dependent.

The protein resides in the nucleus. It localises to the cytoplasm. In terms of biological role, component of the velvet transcription factor complex that controls sexual/asexual developmental ratio in response to light, promoting sexual development in the darkness while stimulating asexual sporulation under illumination. The velvet complex acts as a global regulator for secondary metabolite gene expression. Component of the velB-VosA heterodimeric complex that plays a dual role in activating genes associated with spore maturation and repressing certain development-associated genes. The velB-VosA complex binds DNA through the DNA-binding domain of vosA that recognizes an 11-nucleotide consensus sequence 5'-CTGGCCGCGGC-3' consisting of two motifs in the promoters of key developmental regulatory genes. This chain is Velvet complex subunit B, found in Schizophyllum commune (strain H4-8 / FGSC 9210) (Split gill fungus).